The following is a 335-amino-acid chain: Mitochondrial carrier protein CoAc2 (335 aa).

6 consecutive transmembrane segments (helical) span residues 12-32 (SGPGLPLAVRELLAGGVAGGV), 75-95 (FYRGNGASVARIVPYAALHYM), 119-139 (LVAGSIAGGTAVICTYPLDLV), 187-207 (GMAPSLYGIFPYSGLKFYFYE), 225-242 (LGCGSVAGLLGQTITYPL), and 280-302 (LFSGLSINYLKVVPSVAIGFTVY). Solcar repeat units follow at residues 17-103 (PLAV…YRRW), 113-212 (QGPV…MKSH), and 219-308 (KGII…MKVC).

Belongs to the mitochondrial carrier (TC 2.A.29) family. As to expression, expressed throughout the plant.

The protein resides in the mitochondrion inner membrane. Its function is as follows. Required for the accumulation of coenzyme A in the mitochondrial matrix. The sequence is that of Mitochondrial carrier protein CoAc2 from Zea mays (Maize).